The chain runs to 108 residues: PTS system fructose-like EIIB component 1 (108 aa).

Residues 1 to 101 (MSKKLIALCA…AAGIIKEIEE (101 aa)) form the PTS EIIB type-2 domain. Catalysis depends on Cys11, which acts as the Phosphocysteine intermediate. Cys11 bears the Phosphocysteine; by EIIA mark.

The protein resides in the cytoplasm. The enzyme catalyses D-fructose(out) + N(pros)-phospho-L-histidyl-[protein] = D-fructose 1-phosphate(in) + L-histidyl-[protein]. Its function is as follows. The phosphoenolpyruvate-dependent sugar phosphotransferase system (sugar PTS), a major carbohydrate active transport system, catalyzes the phosphorylation of incoming sugar substrates concomitantly with their translocation across the cell membrane. The enzyme II FryABC PTS system is involved in fructose transport. This chain is PTS system fructose-like EIIB component 1 (fryB), found in Shigella flexneri.